Consider the following 112-residue polypeptide: UPF0342 protein SP_1372 (112 aa).

The protein belongs to the UPF0342 family.

The sequence is that of UPF0342 protein SP_1372 from Streptococcus pneumoniae serotype 4 (strain ATCC BAA-334 / TIGR4).